The sequence spans 488 residues: MQQFQLYINGKFEDGAAQFDSINPATGEIWAKMPEARTDQVNRAVDAAEQAFYDSSWSGLTASQRGKLLYKLADLVEKSAPRLAALETTDTGKIIRETSSQIAYVAEYYRYYAGLADKIEGSFIPVDKPDMQAWLVREPVGVVAAIVPWNSQLFLSAVKVGPALAAGCTVVLKASEEAPAPLLEFAKLIDEAGFPAGVVNVITGFGPECGAVLSAHPKVAHIAFTGGPETAKHIVRNSAENLAKVSLELGGKSPFIVFADTDINSALNAQIAAIFAATGQSCVAGSRLLIEESIKDEFLQRLAERVQSIKMGLPDDMQTEYGPLCTLKQREKIQQVVQRSVEQGAKLITGGQVCDGAGYYYPPTILDCSGVSDAQSIHTELFGPVLSVDTFSTEAEAIQKANSTPYGLASGVFTSNLTRAHRMTRAIRSGIVWLNTYRVVSPLAPFGGYGLSGHGREGGLSAALEYTTTKTVWLRMSDQPIDDPFVMR.

NAD(+)-binding positions include 149–150 (WN) and 226–227 (GG). Residue Glu248 is the Proton acceptor of the active site. Leu249 contacts NAD(+). Cys282 serves as the catalytic Nucleophile. Residue Glu380 participates in NAD(+) binding.

This sequence belongs to the aldehyde dehydrogenase family. In terms of assembly, homodimer.

It carries out the reaction (Z)-2-((N-methylformamido)methylene)-5-hydroxybutanolactone + NAD(+) + H2O = (E)-2-((N-methylformamido) methylene)succinate + NADH + 3 H(+). Functionally, involved in the degradation of the pyridine ring of trigonelline (TG; N-methylnicotinate) into succinate and methylamine as carbon and nitrogen sources, respectively. Catalyzes the NAD(+)-dependent oxidation of (Z)-2-((N-methylformamido)methylene)-5-hydroxybutyrolactone (MFMB) to yield (E)-2-((N-methylformamido)methylene)succinate (MFMS). This Acinetobacter baylyi (strain ATCC 33305 / BD413 / ADP1) protein is (Z)-2-((N-methylformamido)methylene)-5-hydroxybutyrolactone dehydrogenase.